A 152-amino-acid chain; its full sequence is MAGSPNEDSEGSRITYVKGDLFACPQTDSLVHCISEDCRMGAGIAVLFKKKFGGVQELLNQQKKSGEVAVLKRDGRYIYYLITKKRASHKPTYENLRKSLEAMKSHCLKNGVTDLSMPRIGCGLDRLQWENVSAIIEEVFEATDIRITVYTL.

The residue at position 2 (A2) is an N-acetylalanine. The region spanning 2-152 (AGSPNEDSEG…TDIRITVYTL (151 aa)) is the Macro domain. Residue S4 is modified to Phosphoserine. Position 21 (L21) interacts with substrate. Residue K84 is the Nucleophile of the active site. Substrate-binding positions include 119–125 (RIGCGLD) and L152. The Proton acceptor role is filled by D125.

It is found in the nucleus. The protein resides in the nucleoplasm. The protein localises to the nucleolus. It localises to the chromosome. It carries out the reaction 2''-O-acetyl-ADP-D-ribose + H2O = ADP-D-ribose + acetate + H(+). The enzyme catalyses 5-O-(ADP-D-ribosyl)-L-glutamyl-[protein] + H2O = L-glutamyl-[protein] + ADP-D-ribose + H(+). It catalyses the reaction alpha-NAD(+) + H2O = ADP-D-ribose + nicotinamide + H(+). With respect to regulation, subject to competitive inhibition by the product ADP-ribose. Its function is as follows. ADP-ribose glycohydrolase that hydrolyzes ADP-ribose and acts on different substrates, such as proteins ADP-ribosylated on glutamate and O-acetyl-ADP-D-ribose. Specifically acts as a glutamate mono-ADP-ribosylhydrolase by mediating the removal of mono-ADP-ribose attached to glutamate residues on proteins. Does not act on poly-ADP-ribosylated proteins: the poly-ADP-ribose chain of poly-ADP-ribosylated glutamate residues must by hydrolyzed into mono-ADP-ribosylated glutamate by PARG to become a substrate for OARD1. Deacetylates O-acetyl-ADP ribose, a signaling molecule generated by the deacetylation of acetylated lysine residues in histones and other proteins. Catalyzes the deacylation of O-acetyl-ADP-ribose, O-propionyl-ADP-ribose and O-butyryl-ADP-ribose, yielding ADP-ribose plus acetate, propionate and butyrate, respectively. This is ADP-ribose glycohydrolase OARD1 from Bos taurus (Bovine).